The following is a 202-amino-acid chain: Coiled-coil domain-containing protein 69 (202 aa).

Residues 1 to 11 (MGCRQSRHSRG) show a composition bias toward basic residues. 2 disordered regions span residues 1–20 (MGCR…VEET) and 32–52 (GRIL…SNAQ). The N-myristoyl glycine moiety is linked to residue glycine 2. Over residues 32–42 (GRILEGRHEEA) the composition is skewed to basic and acidic residues. Serine 92 carries the post-translational modification Phosphoserine. Residues 112-146 (WEQELESLHHVIEMKNERIHELEKQLFLLEMLKEK) adopt a coiled-coil conformation.

Belongs to the CCDC69 family.

The protein localises to the cytoplasm. It is found in the cytoskeleton. It localises to the spindle. Its subcellular location is the midbody. Functionally, may act as a scaffold to regulate the recruitment and assembly of spindle midzone components. Required for the localization of AURKB and PLK1 to the spindle midzone. This Mus musculus (Mouse) protein is Coiled-coil domain-containing protein 69 (Ccdc69).